The primary structure comprises 404 residues: Keratin, type I cuticular Ha3-II (404 aa).

Residues 1–56 are head; the sequence is MPYNFCLPSLSCRTSCSSRPCVPPSCHGYTLPGACNIPANVSNCNWFCEGSFNGSE. Positions 56–367 constitute an IF rod domain; sequence EKETMQFLND…SLLESEDCKL (312 aa). The interval 57–91 is coil 1A; that stretch reads KETMQFLNDRLASYLEKVRQLERDNAELENLIRER. The tract at residues 92–102 is linker 1; it reads SQQQEPLLCPS. Residues 103 to 203 form a coil 1B region; that stretch reads YQSYFKTIEE…HEQEVNTLRC (101 aa). Residues 204-219 are linker 12; the sequence is QLGDRLNVEVDAAPAV. A coil 2 region spans residues 220-363; that stretch reads DLNQVLNETR…NTYRSLLESE (144 aa). The interval 364–404 is tail; that stretch reads DCKLPSNPCATTNACEKPIGSCVTNPCGPRSRCGPCNTFGY.

Belongs to the intermediate filament family.

This chain is Keratin, type I cuticular Ha3-II (KRT33B), found in Homo sapiens (Human).